The sequence spans 660 residues: tRNA 5-methylaminomethyl-2-thiouridine biosynthesis bifunctional protein MnmC (660 aa).

Residues 1 to 235 (MTITRHARID…KWEVLRGTFI (235 aa)) are tRNA (mnm(5)s(2)U34)-methyltransferase. An FAD-dependent cmnm(5)s(2)U34 oxidoreductase region spans residues 266–660 (IGAGLAGCAT…LRGLIRGGGK (395 aa)).

In the N-terminal section; belongs to the methyltransferase superfamily. tRNA (mnm(5)s(2)U34)-methyltransferase family. This sequence in the C-terminal section; belongs to the DAO family. Requires FAD as cofactor.

It localises to the cytoplasm. The enzyme catalyses 5-aminomethyl-2-thiouridine(34) in tRNA + S-adenosyl-L-methionine = 5-methylaminomethyl-2-thiouridine(34) in tRNA + S-adenosyl-L-homocysteine + H(+). Its function is as follows. Catalyzes the last two steps in the biosynthesis of 5-methylaminomethyl-2-thiouridine (mnm(5)s(2)U) at the wobble position (U34) in tRNA. Catalyzes the FAD-dependent demodification of cmnm(5)s(2)U34 to nm(5)s(2)U34, followed by the transfer of a methyl group from S-adenosyl-L-methionine to nm(5)s(2)U34, to form mnm(5)s(2)U34. The chain is tRNA 5-methylaminomethyl-2-thiouridine biosynthesis bifunctional protein MnmC from Pseudomonas savastanoi pv. phaseolicola (strain 1448A / Race 6) (Pseudomonas syringae pv. phaseolicola (strain 1448A / Race 6)).